A 92-amino-acid chain; its full sequence is MAFLARCFGCQACRSVALLSGRYLQSRVWMGLPDSWPLLSLQQARGRARGNEYQPSNIKRKHKHGWVRRLSTPAGVQVILRRMLKGRKSLSH.

The N-terminal 46 residues, 1–46 (MAFLARCFGCQACRSVALLSGRYLQSRVWMGLPDSWPLLSLQQARG), are a transit peptide targeting the mitochondrion. At Ser71 the chain carries Phosphoserine.

Belongs to the bacterial ribosomal protein bL34 family. Component of the mitochondrial ribosome large subunit (39S) which comprises a 16S rRNA and about 50 distinct proteins.

Its subcellular location is the mitochondrion. The protein is Large ribosomal subunit protein bL34m (Mrpl34) of Mus musculus (Mouse).